Here is a 207-residue protein sequence, read N- to C-terminus: MARYIGPKAKLSRREGTDLFLKSARRSLADKCKLDSKPGQHGRTSGARTSDYGTQLREKQKVKRIYGVLERQFRRYFAEADRRKGNTGENLLQLLESRLDNVVYRMGFGSTRAEARQLVSHKSITVNGIVANVPSQQVKAGDVIAIREKAKKQARIIEALSLAEQGGMPSWVAVDAKKFEGTFKQVPERADIGGDINESLIVELYSR.

The interval 31-55 (KCKLDSKPGQHGRTSGARTSDYGTQ) is disordered. Residues 42–53 (GRTSGARTSDYG) are compositionally biased toward polar residues. An S4 RNA-binding domain is found at 97-160 (SRLDNVVYRM…KKQARIIEAL (64 aa)).

This sequence belongs to the universal ribosomal protein uS4 family. As to quaternary structure, part of the 30S ribosomal subunit. Contacts protein S5. The interaction surface between S4 and S5 is involved in control of translational fidelity.

In terms of biological role, one of the primary rRNA binding proteins, it binds directly to 16S rRNA where it nucleates assembly of the body of the 30S subunit. Its function is as follows. With S5 and S12 plays an important role in translational accuracy. The protein is Small ribosomal subunit protein uS4 of Burkholderia multivorans (strain ATCC 17616 / 249).